A 455-amino-acid chain; its full sequence is Ribosomal protein uS12 methylthiotransferase RimO (455 aa).

One can recognise an MTTase N-terminal domain in the interval 30–140 (PTIGMVSLGC…VLDAVHGAVP (111 aa)). Residues cysteine 39, cysteine 75, cysteine 104, cysteine 171, cysteine 175, and cysteine 178 each coordinate [4Fe-4S] cluster. The Radical SAM core domain maps to 157–386 (LTPRHFSYLK…MEKAQAISEA (230 aa)). Residues 389–455 (AAKVGRRIEV…GEYDLWGRPV (67 aa)) enclose the TRAM domain.

The protein belongs to the methylthiotransferase family. RimO subfamily. It depends on [4Fe-4S] cluster as a cofactor.

It is found in the cytoplasm. It catalyses the reaction L-aspartate(89)-[ribosomal protein uS12]-hydrogen + (sulfur carrier)-SH + AH2 + 2 S-adenosyl-L-methionine = 3-methylsulfanyl-L-aspartate(89)-[ribosomal protein uS12]-hydrogen + (sulfur carrier)-H + 5'-deoxyadenosine + L-methionine + A + S-adenosyl-L-homocysteine + 2 H(+). Catalyzes the methylthiolation of an aspartic acid residue of ribosomal protein uS12. This Cereibacter sphaeroides (strain ATCC 17029 / ATH 2.4.9) (Rhodobacter sphaeroides) protein is Ribosomal protein uS12 methylthiotransferase RimO.